The chain runs to 548 residues: Membrane protein insertase YidC (548 aa).

The next 5 membrane-spanning stretches (helical) occupy residues 6-26, 349-369, 424-444, 455-475, and 503-523; these read NLIL…WESD, TVFQ…TLLV, LGGC…YWAL, FALW…PILM, and PIIF…YWLV.

The protein belongs to the OXA1/ALB3/YidC family. Type 1 subfamily. Interacts with the Sec translocase complex via SecD. Specifically interacts with transmembrane segments of nascent integral membrane proteins during membrane integration.

The protein resides in the cell inner membrane. Functionally, required for the insertion and/or proper folding and/or complex formation of integral membrane proteins into the membrane. Involved in integration of membrane proteins that insert both dependently and independently of the Sec translocase complex, as well as at least some lipoproteins. Aids folding of multispanning membrane proteins. The protein is Membrane protein insertase YidC of Aeromonas salmonicida (strain A449).